Here is a 153-residue protein sequence, read N- to C-terminus: Probable phospholipase A2 homolog 2 (153 aa).

Positions 1–25 are cleaved as a signal peptide; that stretch reads MRFFLKLAPRCSVLLLLLLVTASRG. 6 disulfides stabilise this stretch: C42–C70, C46–C76, C51–C123, C63–C83, C82–C109, and C89–C102. Residues Y62, G64, and Y67 each contribute to the Ca(2+) site. H86 is a catalytic residue. Residue D87 coordinates Ca(2+).

The protein belongs to the phospholipase A2 family. The cofactor is Ca(2+).

Its subcellular location is the secreted. It catalyses the reaction a 1,2-diacyl-sn-glycero-3-phosphocholine + H2O = a 1-acyl-sn-glycero-3-phosphocholine + a fatty acid + H(+). In terms of biological role, PA2 catalyzes the calcium-dependent hydrolysis of the 2-acyl groups in 3-sn-phosphoglycerides. Releases lysophospholipids (LPLs) and free fatty acids (FFAs) from membrane phospholipids in response to hormones and other external stimuli. The chain is Probable phospholipase A2 homolog 2 (PLA2-II) from Oryza sativa subsp. japonica (Rice).